The following is a 191-amino-acid chain: Holliday junction branch migration complex subunit RuvA (191 aa).

The tract at residues 1–64 (MIGRLTGTLA…EDAQLLYGFL (64 aa)) is domain I. A domain II region spans residues 65 to 138 (TATERATFRQ…KGKLGPDLAL (74 aa)). Positions 138–142 (LPGAV) are flexible linker. Residues 143-191 (IRNEAQSDIVQALIALGYNEREAAAAIKPLPADVGVSDGIKLALRALGK) are domain III.

It belongs to the RuvA family. As to quaternary structure, homotetramer. Forms an RuvA(8)-RuvB(12)-Holliday junction (HJ) complex. HJ DNA is sandwiched between 2 RuvA tetramers; dsDNA enters through RuvA and exits via RuvB. An RuvB hexamer assembles on each DNA strand where it exits the tetramer. Each RuvB hexamer is contacted by two RuvA subunits (via domain III) on 2 adjacent RuvB subunits; this complex drives branch migration. In the full resolvosome a probable DNA-RuvA(4)-RuvB(12)-RuvC(2) complex forms which resolves the HJ.

Its subcellular location is the cytoplasm. The RuvA-RuvB-RuvC complex processes Holliday junction (HJ) DNA during genetic recombination and DNA repair, while the RuvA-RuvB complex plays an important role in the rescue of blocked DNA replication forks via replication fork reversal (RFR). RuvA specifically binds to HJ cruciform DNA, conferring on it an open structure. The RuvB hexamer acts as an ATP-dependent pump, pulling dsDNA into and through the RuvAB complex. HJ branch migration allows RuvC to scan DNA until it finds its consensus sequence, where it cleaves and resolves the cruciform DNA. The chain is Holliday junction branch migration complex subunit RuvA from Leptothrix cholodnii (strain ATCC 51168 / LMG 8142 / SP-6) (Leptothrix discophora (strain SP-6)).